The primary structure comprises 565 residues: Proline--tRNA ligase (565 aa).

It belongs to the class-II aminoacyl-tRNA synthetase family. ProS type 1 subfamily. As to quaternary structure, homodimer.

The protein localises to the cytoplasm. The catalysed reaction is tRNA(Pro) + L-proline + ATP = L-prolyl-tRNA(Pro) + AMP + diphosphate. Functionally, catalyzes the attachment of proline to tRNA(Pro) in a two-step reaction: proline is first activated by ATP to form Pro-AMP and then transferred to the acceptor end of tRNA(Pro). As ProRS can inadvertently accommodate and process non-cognate amino acids such as alanine and cysteine, to avoid such errors it has two additional distinct editing activities against alanine. One activity is designated as 'pretransfer' editing and involves the tRNA(Pro)-independent hydrolysis of activated Ala-AMP. The other activity is designated 'posttransfer' editing and involves deacylation of mischarged Ala-tRNA(Pro). The misacylated Cys-tRNA(Pro) is not edited by ProRS. The sequence is that of Proline--tRNA ligase from Francisella tularensis subsp. holarctica (strain FTNF002-00 / FTA).